Consider the following 267-residue polypeptide: Geranylgeranylglyceryl phosphate synthase (267 aa).

Residues D23 and S52 each coordinate Mg(2+). Residues 173–179 (YLEAGSG), 205–206 (GG), and 227–228 (GT) contribute to the sn-glycerol 1-phosphate site.

This sequence belongs to the GGGP/HepGP synthase family. Group II subfamily. Mg(2+) is required as a cofactor.

It localises to the cytoplasm. It catalyses the reaction sn-glycerol 1-phosphate + (2E,6E,10E)-geranylgeranyl diphosphate = sn-3-O-(geranylgeranyl)glycerol 1-phosphate + diphosphate. It functions in the pathway membrane lipid metabolism; glycerophospholipid metabolism. Its function is as follows. Prenyltransferase that catalyzes the transfer of the geranylgeranyl moiety of geranylgeranyl diphosphate (GGPP) to the C3 hydroxyl of sn-glycerol-1-phosphate (G1P). This reaction is the first ether-bond-formation step in the biosynthesis of archaeal membrane lipids. This is Geranylgeranylglyceryl phosphate synthase from Caldivirga maquilingensis (strain ATCC 700844 / DSM 13496 / JCM 10307 / IC-167).